The primary structure comprises 562 residues: Nucleoprotein (562 aa).

The interval 53 to 238 is binding site for the cap structure m7GTP; the sequence is MRRVKRDDSD…ITQEESQINI (186 aa). Mn(2+) is bound by residues D381 and E383. E391, C498, H501, and C522 together coordinate Zn(2+). D526 is a binding site for Mn(2+).

The protein belongs to the arenaviridae nucleocapsid protein family. Homomultimerizes to form the nucleocapsid. Binds to viral genomic RNA. Interacts with glycoprotein G2. Interacts with protein Z; this interaction probably directs the encapsidated genome to budding sites. Interacts with protein L; this interaction does not interfere with Z-L interaction. Interacts with host IKBKE (via Protein kinase domain); the interaction inhibits IKBKE kinase activity.

It localises to the virion. The protein resides in the host cytoplasm. Encapsidates the genome, protecting it from nucleases. The encapsidated genomic RNA is termed the nucleocapsid (NC). Serves as template for viral transcription and replication. The increased presence of protein N in host cell does not seem to trigger the switch from transcription to replication as observed in other negative strain RNA viruses. Through the interaction with host IKBKE, strongly inhibits the phosphorylation and nuclear translocation of host IRF3, a protein involved in interferon activation pathway, leading to the inhibition of interferon-beta and IRF3-dependent promoters activation. Also encodes a functional 3'-5' exoribonuclease that degrades preferentially dsRNA substrates and thereby participates in the suppression of interferon induction. The chain is Nucleoprotein from Neotoma (wood rats).